Consider the following 192-residue polypeptide: Peptidyl-tRNA hydrolase (192 aa).

His17 is a binding site for tRNA. Catalysis depends on His22, which acts as the Proton acceptor. 3 residues coordinate tRNA: Phe68, Asn70, and Asn116.

Belongs to the PTH family. In terms of assembly, monomer.

The protein resides in the cytoplasm. The catalysed reaction is an N-acyl-L-alpha-aminoacyl-tRNA + H2O = an N-acyl-L-amino acid + a tRNA + H(+). Hydrolyzes ribosome-free peptidyl-tRNAs (with 1 or more amino acids incorporated), which drop off the ribosome during protein synthesis, or as a result of ribosome stalling. In terms of biological role, catalyzes the release of premature peptidyl moieties from peptidyl-tRNA molecules trapped in stalled 50S ribosomal subunits, and thus maintains levels of free tRNAs and 50S ribosomes. The sequence is that of Peptidyl-tRNA hydrolase from Xylella fastidiosa (strain 9a5c).